We begin with the raw amino-acid sequence, 318 residues long: Acetaldehyde dehydrogenase 1 (318 aa).

An NAD(+)-binding site is contributed by serine 15–isoleucine 18. The Acyl-thioester intermediate role is filled by cysteine 133. Residues serine 164–asparagine 172 and asparagine 289 contribute to the NAD(+) site.

It belongs to the acetaldehyde dehydrogenase family.

It carries out the reaction acetaldehyde + NAD(+) + CoA = acetyl-CoA + NADH + H(+). The sequence is that of Acetaldehyde dehydrogenase 1 (xylQ) from Azotobacter vinelandii (strain DJ / ATCC BAA-1303).